Here is a 514-residue protein sequence, read N- to C-terminus: MDYVAQSPWIATLIVTATTYCTLRWVQYWRSWVNVPVVGRRGFLGSWISTILWTWEARGCIQKGYEKNKDFAFQVSTPNGWEVCICNDDMIKEYKNLMDDQMSALAVTSETFQAKYTLPGADWDAVHKLVPQPALAKSLMWLRNRAANDTDPYFPDFVRAFQRAFKEEIQVEQDGPFEWQSFPCFPRYSRVVAALTVKALLGSLANRPELIDLLCEYAEVIPLDGFFIALFPAILKPIVAFFCKAPRLSDRLVKVITEEIARRELENKHRIPEDMTDWMAQWVKDNPGYSIESAVVRVIATFFGGIHTTTQLTVHTLLEIATRPEYVDPLRQEITTALKAHGGWTKSAIESMTKLDSFIKEAQRFNPLDAASLARQATRDFQFSNGLKLPRGTWVFAPNGPMLFDESLYPAGSQFDGLRFWKLAEQTQRPHDYRLVTASSKYLQFGDGRHTCPGRFMAADEIRLIVAHTLFHFDIAIKNHGPRPRNTTFKKICFPDMSAEIMLRPRKLHGSEGN.

The chain crosses the membrane as a helical span at residues 3–23 (YVAQSPWIATLIVTATTYCTL). An N-linked (GlcNAc...) asparagine glycan is attached at Asn-148. Cys-452 is a binding site for heme. The N-linked (GlcNAc...) asparagine glycan is linked to Asn-486.

The protein belongs to the cytochrome P450 family. Requires heme as cofactor.

Its subcellular location is the membrane. It functions in the pathway secondary metabolite biosynthesis. In terms of biological role, cytochrome P450 monooxygenase; part of the gene cluster that mediates the biosynthesis of the indole diterpenes penitrems. The geranylgeranyl diphosphate (GGPP) synthase ptmG catalyzes the first step in penitrem biosynthesis via conversion of farnesyl pyrophosphate and isopentyl pyrophosphate into geranylgeranyl pyrophosphate (GGPP). Condensation of indole-3-glycerol phosphate with GGPP by the prenyl transferase ptmC then forms 3-geranylgeranylindole (3-GGI). Epoxidation by the FAD-dependent monooxygenase ptmM leads to a epoxidized-GGI that is substrate of the terpene cyclase ptmB for cyclization to yield paspaline. Paspaline is subsequently converted to 13-desoxypaxilline by the cytochrome P450 monooxygenase ptmP, the latter being then converted to paxilline by the cytochrome P450 monooxygenase ptmQ. Paxilline is converted to beta-paxitriol via C-10 ketoreduction by the short-chain dehydrogenase ptmH which can be monoprenylated at the C-20 by the indole diterpene prenyltransferase ptmD. A two-step elimination (acetylation and elimination) process performed by the O-acetyltransferase ptmV and ptmI leads to the production of the prenylated form of penijanthine. The FAD-linked oxidoreductase ptmO then converts the prenylated form of penijanthine into PC-M5 which is in turn transformed into PC-M4 by the aromatic dimethylallyltransferase ptmE. Five sequential oxidative transformations performed by the cytochrome P450 monooxygenases ptmK, ptmU, ptmL, ptmN and ptmJ yield the various penitrem compounds. PtmK, ptmU and ptmM are involved in the formation of the key bicyclic ring of penitrem C via the formation of the intermediates secopenitrem D and penitrem D. PtmL catalyzes the epoxidation of penitrem D and C to yield penitrem B and F, respectively. PtmJ catalyzes the last benzylic hydroxylation to convert penitrem B to prenitrem E and penitrem F to penitrem A. This Penicillium ochrochloron protein is Cytochrome P450 monooxygenase ptmQ.